We begin with the raw amino-acid sequence, 658 residues long: Endoglucanase 3 (658 aa).

The first 23 residues, 1-23 (MQLKNFYPKMSVLGIATVMALTA), serve as a signal peptide directing secretion. Residue cysteine 24 is the site of N-palmitoyl cysteine attachment. Residue cysteine 24 is the site of S-diacylglycerol cysteine attachment. A propeptide spanning residues 24 to 265 (CGDENTQALF…TDSLFIDNIY (242 aa)) is cleaved from the precursor. Residues 42–83 (ENQVPVSSSDMSPTSSDAVIDPTSSSAAVVDPSTLPAEGPIT) are disordered. The span at 45–58 (VPVSSSDMSPTSSD) shows a compositional bias: low complexity. Residues 87-277 (GLGTLVDDFE…DSSEVEKDQP (191 aa)) enclose the CBM11 domain. Catalysis depends on glutamate 448, which acts as the Proton donor. The active-site Nucleophile is the glutamate 597.

It belongs to the glycosyl hydrolase 5 (cellulase A) family. In terms of assembly, monomer. Post-translationally, may be a lipoprotein and may be glycosylated.

It is found in the membrane. It carries out the reaction Endohydrolysis of (1-&gt;4)-beta-D-glucosidic linkages in cellulose, lichenin and cereal beta-D-glucans.. Exhibits both endoglucanase and cellobiosidase activities. The chain is Endoglucanase 3 (cel-3) from Fibrobacter succinogenes (strain ATCC 19169 / S85).